Here is a 43-residue protein sequence, read N- to C-terminus: uncharacterized protein (43 aa).

It belongs to the ELIP/psbS family.

It localises to the plastid. The protein localises to the chloroplast. Functionally, possible role in chlorophyll and/or carotenoid binding. This is an uncharacterized protein from Cyanidium caldarium (Red alga).